A 645-amino-acid chain; its full sequence is Crossover junction endonuclease mus-81 (645 aa).

Disordered regions lie at residues 98-119 and 219-310; these read LAAA…RTAR and GVAG…EDRK. The span at 223-252 shows a compositional bias: polar residues; the sequence is SANTSRNAIASGSGTSNPNRSENVNPNRQD. Over residues 296 to 305 the composition is skewed to acidic residues; sequence DSDDEDPKYD. An ERCC4 domain is found at 353–459; it reads ELVLDTREVQ…NVVYIIENYN (107 aa).

It belongs to the XPF family. Interacts with eme-1. Requires Mg(2+) as cofactor.

The protein localises to the nucleus. Its function is as follows. Interacts with eme-1 to form a DNA structure-specific endonuclease with substrate preference for branched DNA structures with a 5'-end at the branch nick. Typical substrates include 3'-flap structures, D-loops, replication forks and nicked Holliday junctions. May be required in mitosis for the processing of stalled or collapsed replication fork intermediates. May be required in meiosis for the repair of meiosis-specific double strand breaks subsequent to single-end invasion (SEI). The chain is Crossover junction endonuclease mus-81 (mus-81) from Neurospora crassa (strain ATCC 24698 / 74-OR23-1A / CBS 708.71 / DSM 1257 / FGSC 987).